The sequence spans 461 residues: Kynurenine 3-monooxygenase (461 aa).

Residues 17 to 18 (LA), 37 to 39 (ERR), and Ala-56 contribute to the FAD site. Residues Arg-84 and Tyr-98 each coordinate L-kynurenine. FAD contacts are provided by residues Arg-111, Leu-135, Asp-311, and 324–325 (MN). Residues Asn-369 and Tyr-404 each contribute to the L-kynurenine site.

This sequence belongs to the aromatic-ring hydroxylase family. KMO subfamily. Requires FAD as cofactor.

The catalysed reaction is L-kynurenine + NADPH + O2 + H(+) = 3-hydroxy-L-kynurenine + NADP(+) + H2O. Its pathway is cofactor biosynthesis; NAD(+) biosynthesis; quinolinate from L-kynurenine: step 1/3. It functions in the pathway siderophore biosynthesis; quinolobactin biosynthesis. Its function is as follows. Catalyzes the hydroxylation of L-kynurenine (L-Kyn) to form 3-hydroxy-L-kynurenine (L-3OHKyn). Probably required for the synthesis of quinolinic acid and the siderophore quinolobactin. This is Kynurenine 3-monooxygenase from Pseudomonas fluorescens.